The following is a 301-amino-acid chain: Small ribosomal subunit protein uS2 (301 aa).

Positions 237-301 (PTESWNDTVV…QDWSNSTSQW (65 aa)) are disordered. A compositionally biased stretch (low complexity) spans 264 to 278 (PQYAPAPQAAAAPVA).

This sequence belongs to the universal ribosomal protein uS2 family. In terms of assembly, component of the small ribosomal subunit. Mature ribosomes consist of a small (40S) and a large (60S) subunit. The 40S subunit contains about 33 different proteins and 1 molecule of RNA (18S). The 60S subunit contains about 49 different proteins and 3 molecules of RNA (28S, 5.8S and 5S). Interacts with ribosomal protein S21.

The protein localises to the cytoplasm. Its function is as follows. Required for the assembly and/or stability of the 40S ribosomal subunit. Required for the processing of the 20S rRNA-precursor to mature 18S rRNA in a late step of the maturation of 40S ribosomal subunits. This is Small ribosomal subunit protein uS2 from Diaphorina citri (Asian citrus psyllid).